Consider the following 237-residue polypeptide: Glutathione S-transferase psoE (237 aa).

One can recognise a GST N-terminal domain in the interval 2–79 (VFGTLYTFPG…YITSQNEQTT (78 aa)). Positions 37, 49, 50, 63, 64, and 99 each coordinate glutathione. Lys-49 serves as a coordination point for substrate. The 139-residue stretch at 84-222 (DKKEYAEIIK…NNPPEKKPET (139 aa)) folds into the GST C-terminal domain. Gln-108 is a binding site for substrate. The segment covering 208–222 (EPKLTNNPPEKKPET) has biased composition (basic and acidic residues). The interval 208-237 (EPKLTNNPPEKKPETVPKNGAAVAIEATQA) is disordered.

It belongs to the GST superfamily. Requires glutathione as cofactor.

It participates in secondary metabolite biosynthesis. Functionally, glutathione S-transferase; part of the gene cluster that mediates the biosynthesis of pseurotin A, a competitive inhibitor of chitin synthase and an inducer of nerve-cell proliferation. The PKS-NRPS hybrid synthetase psoA is responsible for the biosynthesis of azaspirene, one of the first intermediates having the 1-oxa-7-azaspiro[4,4]-non-2-ene-4,6-dione core of pseurotin, via condensation of one acetyl-CoA, 4 malonyl-CoA, and a L-phenylalanine molecule. The dual-functional monooxygenase/methyltransferase psoF seems to be involved in the addition of the C3 methyl group onto the pseurotin scaffold. Azaspirene is then converted to synerazol through 4 steps including oxidation of C17 by the cytochrome P450 monooxygenase psoD, O-methylation of the hydroxy group of C8 by the methyltransferase psoC, and the trans-to-cis isomerization of the C13 olefin by the glutathione S-transferase psoE. The fourth step of synerazol production is performed by the dual-functional monooxygenase/methyltransferase psoF which seems to catalyze the epoxidation of the intermediate deepoxy-synerazol. Synerazol can be attacked by a water molecule nonenzymatically at two different positions to yield two diol products, pseurotin A and pseurotin D. This Aspergillus fumigatus (strain ATCC MYA-4609 / CBS 101355 / FGSC A1100 / Af293) (Neosartorya fumigata) protein is Glutathione S-transferase psoE.